The chain runs to 478 residues: Melanopsin (478 aa).

Pro residues predominate over residues 1–14 (MNPPSGPRVPPSPT). Residues 1–32 (MNPPSGPRVPPSPTQEPSCMATPAPPSWWDSS) are disordered. Residues 1–72 (MNPPSGPRVP…VDVPDHAHYT (72 aa)) are Extracellular-facing. A helical membrane pass occupies residues 73–93 (LGTVILLVGLTGMLGNLTVIY). Residues 94 to 107 (TFCRSRSLRTPANM) lie on the Cytoplasmic side of the membrane. A helical transmembrane segment spans residues 108–128 (FIINLAVSDFLMSFTQAPVFF). Residues 129-144 (TSSLYKQWLFGETGCE) are Extracellular-facing. A disulfide bridge links Cys143 with Cys221. Residues 145 to 165 (FYAFCGALFGISSMITLTAIA) traverse the membrane as a helical segment. At 166–188 (LDRYLVITRPLATFGVASKRRAA) the chain is on the cytoplasmic side. Residues 189–209 (FVLLGVWLYALAWSLPPFFGW) form a helical membrane-spanning segment. Residues 210 to 238 (SAYVPEGLLTSCSWDYMSFTPAVRAYTML) are Extracellular-facing. Residues 239-259 (LCCFVFFLPLLIIIYCYIFIF) traverse the membrane as a helical segment. The Cytoplasmic segment spans residues 260-296 (RAIRETGRALQTFGACKGNGESLWQRQRLQSECKMAK). The helical transmembrane segment at 297 to 317 (IMLLVILLFVLSWAPYSAVAL) threads the bilayer. Topologically, residues 318 to 332 (VAFAGYAHVLTPYMS) are extracellular. A helical membrane pass occupies residues 333–353 (SVPAVIAKASAIHNPIIYAIT). Lys340 is subject to N6-(retinylidene)lysine. Topologically, residues 354–478 (HPKYRVAIAQ…GLIPSQDPRM (125 aa)) are cytoplasmic. The segment at 440 to 478 (LYGQGLEDLEAKAPPRPQGHEAETPGKTKGLIPSQDPRM) is disordered. Positions 448–465 (LEAKAPPRPQGHEAETPG) are enriched in basic and acidic residues.

This sequence belongs to the G-protein coupled receptor 1 family. Opsin subfamily. In terms of tissue distribution, expressed in the retina.

It is found in the cell membrane. It localises to the cell projection. The protein resides in the axon. The protein localises to the dendrite. Its subcellular location is the perikaryon. Functionally, photoreceptor that binds cis-retinaldehydes. Contributes to pupillar reflex, photoentrainment and other non-image forming responses to light. May be involved in the optokinetic visual tracking response. May be involved in the regulation of retinal hyaloid vessel growth and regression. The polypeptide is Melanopsin (OPN4) (Homo sapiens (Human)).